A 102-amino-acid chain; its full sequence is NADH-quinone oxidoreductase subunit K (102 aa).

The next 3 membrane-spanning stretches (helical) occupy residues 6 to 26, 30 to 50, and 62 to 82; these read LEHG…GLMV, ILFV…AFIV, and VMFI…LAIL.

The protein belongs to the complex I subunit 4L family. In terms of assembly, NDH-1 is composed of 13 different subunits. Subunits NuoA, H, J, K, L, M, N constitute the membrane sector of the complex.

The protein resides in the cell inner membrane. The enzyme catalyses a quinone + NADH + 5 H(+)(in) = a quinol + NAD(+) + 4 H(+)(out). Functionally, NDH-1 shuttles electrons from NADH, via FMN and iron-sulfur (Fe-S) centers, to quinones in the respiratory chain. The immediate electron acceptor for the enzyme in this species is believed to be ubiquinone. Couples the redox reaction to proton translocation (for every two electrons transferred, four hydrogen ions are translocated across the cytoplasmic membrane), and thus conserves the redox energy in a proton gradient. The chain is NADH-quinone oxidoreductase subunit K from Pseudomonas fluorescens (strain SBW25).